Here is a 265-residue protein sequence, read N- to C-terminus: MTRIHASAVVDSKAELASDVEVGPFSVIGPNVKIGSGTKVGSHTVIEGHTTIGKENTFAHFAAIGGPPQDMKYRGEPTQLIIGDRNTIREFTTIHTGTSQDLGITRIGNDNWIMAYVHIAHDCQVGNHTIFSSNAQIAGHVQVEDWAIMGGMSGVHQFVRIGQHAMLGGASALVQDIPPFVIAAGDKASPHGINVEGLKRRGFSSETVTALRQAYKVLYKDGLSFEDAKVEIQKMVAASSGDQATADKLAQFHDFIAASTRGIIR.

Belongs to the transferase hexapeptide repeat family. LpxA subfamily. As to quaternary structure, homotrimer.

It localises to the cytoplasm. The enzyme catalyses a (3R)-hydroxyacyl-[ACP] + UDP-N-acetyl-alpha-D-glucosamine = a UDP-3-O-[(3R)-3-hydroxyacyl]-N-acetyl-alpha-D-glucosamine + holo-[ACP]. Its pathway is glycolipid biosynthesis; lipid IV(A) biosynthesis; lipid IV(A) from (3R)-3-hydroxytetradecanoyl-[acyl-carrier-protein] and UDP-N-acetyl-alpha-D-glucosamine: step 1/6. Functionally, involved in the biosynthesis of lipid A, a phosphorylated glycolipid that anchors the lipopolysaccharide to the outer membrane of the cell. The sequence is that of Acyl-[acyl-carrier-protein]--UDP-N-acetylglucosamine O-acyltransferase from Polynucleobacter asymbioticus (strain DSM 18221 / CIP 109841 / QLW-P1DMWA-1) (Polynucleobacter necessarius subsp. asymbioticus).